The following is a 174-amino-acid chain: MGAAGVLIGQGFDAHRFAPAGSGRELWIAGLYWPVPDSCSEADAARYEGIEGDSDGDVAAHALIDALLAAARLGDIGSLFGVGADAHGAGRHGIDMLQEVVAHLASNGYTPASASVAIIGNRPKIGTRRAEAEAALSAAVGCPVSVTATTTDHMGFTGRGEGIAAIANALVEKI.

3 residues coordinate a divalent metal cation: aspartate 13, histidine 15, and histidine 61. Residue 13–15 participates in 4-CDP-2-C-methyl-D-erythritol 2-phosphate binding; the sequence is DAH. 4-CDP-2-C-methyl-D-erythritol 2-phosphate-binding positions include 75–77, 149–152, phenylalanine 156, and arginine 159; these read DIG and TTTD.

This sequence belongs to the IspF family. Homotrimer. Requires a divalent metal cation as cofactor.

It catalyses the reaction 4-CDP-2-C-methyl-D-erythritol 2-phosphate = 2-C-methyl-D-erythritol 2,4-cyclic diphosphate + CMP. It participates in isoprenoid biosynthesis; isopentenyl diphosphate biosynthesis via DXP pathway; isopentenyl diphosphate from 1-deoxy-D-xylulose 5-phosphate: step 4/6. Its function is as follows. Involved in the biosynthesis of isopentenyl diphosphate (IPP) and dimethylallyl diphosphate (DMAPP), two major building blocks of isoprenoid compounds. Catalyzes the conversion of 4-diphosphocytidyl-2-C-methyl-D-erythritol 2-phosphate (CDP-ME2P) to 2-C-methyl-D-erythritol 2,4-cyclodiphosphate (ME-CPP) with a corresponding release of cytidine 5-monophosphate (CMP). In Bifidobacterium longum subsp. infantis (strain ATCC 15697 / DSM 20088 / JCM 1222 / NCTC 11817 / S12), this protein is 2-C-methyl-D-erythritol 2,4-cyclodiphosphate synthase.